The sequence spans 118 residues: Large ribosomal subunit protein bL20 (118 aa).

Belongs to the bacterial ribosomal protein bL20 family.

In terms of biological role, binds directly to 23S ribosomal RNA and is necessary for the in vitro assembly process of the 50S ribosomal subunit. It is not involved in the protein synthesizing functions of that subunit. The chain is Large ribosomal subunit protein bL20 from Elusimicrobium minutum (strain Pei191).